The primary structure comprises 156 residues: Small ribosomal subunit protein uS7 (156 aa).

This sequence belongs to the universal ribosomal protein uS7 family. As to quaternary structure, part of the 30S ribosomal subunit. Contacts proteins S9 and S11.

Functionally, one of the primary rRNA binding proteins, it binds directly to 16S rRNA where it nucleates assembly of the head domain of the 30S subunit. Is located at the subunit interface close to the decoding center, probably blocks exit of the E-site tRNA. This Rhodopseudomonas palustris (strain BisB5) protein is Small ribosomal subunit protein uS7.